The primary structure comprises 359 residues: tRNA N6-adenosine threonylcarbamoyltransferase (359 aa).

H115 and H119 together coordinate Fe cation. Substrate-binding positions include 137–141, D170, G183, and N283; that span reads LVSGG. Position 311 (D311) interacts with Fe cation. The segment at 328-359 is disordered; sequence APDSLDIAPRSRWPLDEKSAPVFGTGRRGAKA.

Belongs to the KAE1 / TsaD family. Fe(2+) serves as cofactor.

It is found in the cytoplasm. It catalyses the reaction L-threonylcarbamoyladenylate + adenosine(37) in tRNA = N(6)-L-threonylcarbamoyladenosine(37) in tRNA + AMP + H(+). Functionally, required for the formation of a threonylcarbamoyl group on adenosine at position 37 (t(6)A37) in tRNAs that read codons beginning with adenine. Is involved in the transfer of the threonylcarbamoyl moiety of threonylcarbamoyl-AMP (TC-AMP) to the N6 group of A37, together with TsaE and TsaB. TsaD likely plays a direct catalytic role in this reaction. The protein is tRNA N6-adenosine threonylcarbamoyltransferase of Brucella suis (strain ATCC 23445 / NCTC 10510).